Here is a 200-residue protein sequence, read N- to C-terminus: Recombination protein RecR (200 aa).

The C4-type zinc-finger motif lies at 57–72 (CNECRTFTEEDVCHIC). The Toprim domain occupies 81–176 (GLLCVVESPA…DASRIAHGVP (96 aa)).

The protein belongs to the RecR family.

Its function is as follows. May play a role in DNA repair. It seems to be involved in an RecBC-independent recombinational process of DNA repair. It may act with RecF and RecO. This chain is Recombination protein RecR, found in Vibrio vulnificus (strain CMCP6).